A 1009-amino-acid polypeptide reads, in one-letter code: Glutamate receptor ionotropic, delta-1 (1009 aa).

A signal peptide spans 1 to 20; sequence MEALTLWLLPWICQCVTVRA. Residues 21-436 form an interaction with CBLN1 region; that stretch reads DSIIHIGAIF…ERPMGSRLQG (416 aa). Residues 21–562 lie on the Extracellular side of the membrane; that stretch reads DSIIHIGAIF…SIFSLFAPFD (542 aa). Cystine bridges form between Cys-80/Cys-351, Cys-96/Cys-128, and Cys-294/Cys-306. 2 N-linked (GlcNAc...) asparagine glycosylation sites follow: Asn-131 and Asn-200. N-linked (GlcNAc...) asparagine glycosylation is found at Asn-422 and Asn-498. 3 residues coordinate Ca(2+): Glu-527, Val-530, and Asp-531. A helical membrane pass occupies residues 563–583; that stretch reads FAVWACIAAAIPVVGVLIFVL. Residues 584-637 are Cytoplasmic-facing; it reads NRIQAVRSQSATQPRPSASATLHSAIWIVYGAFVQQGGESSVNSVAMRIVMGSW. The chain crosses the membrane as a helical span at residues 638-658; it reads WLFTLIVCSSYTANLAAFLTV. At 659–830 the chain is on the extracellular side; it reads SRMDNPIRTF…TEGKSLKLHS (172 aa). Ca(2+)-binding residues include Asp-753, Asp-755, and Ser-757. The chain crosses the membrane as a helical span at residues 831 to 851; it reads FAGVFCILAIGLLLACLVAAL. At 852–1009 the chain is on the cytoplasmic side; it reads ELWWNSNRCH…ALDTSHGTSI (158 aa). Residues 931 to 942 are compositionally biased toward polar residues; the sequence is LPEQSSHGTSRT. Positions 931 to 960 are disordered; sequence LPEQSSHGTSRTLSSGPSSNLPLPLSSSAT. The segment covering 943–958 has biased composition (low complexity); sequence LSSGPSSNLPLPLSSS.

The protein belongs to the glutamate-gated ion channel (TC 1.A.10.1) family. GRID1 subfamily. As to quaternary structure, homodimer. Interacts (via extracellular N-terminal domain) with CBLN1 (via C1q domain), and more weakly with CBLN2; the interactions mediate the trans-synaptic adhesion complexes also with neurexins and are required for ligand-gated cation channel activity. In terms of tissue distribution, equally in forebrain and cerebellum.

It is found in the postsynaptic cell membrane. The catalysed reaction is Ca(2+)(in) = Ca(2+)(out). It catalyses the reaction Na(+)(in) = Na(+)(out). Functionally, member of the ionotropic glutamate receptor family, which plays a crucial role in synaptic organization and signal transduction in the central nervous system. Although it shares structural features with ionotropic glutamate receptors, does not bind glutamate as a primary ligand. Instead, forms trans-synaptic adhesion complexes with presynaptic neurexins and cerebellins, regulating NMDA and AMPA receptor activity and influencing synaptic plasticity through signal transduction. In the presence of NRX1B-CBLN1, forms cation-selective channels that are proposed to be gated by glycine and D-serine. However, recent research disputes this ligand-gated cation channel activity. Cation-selective ion channel can be triggered by GRM1 in dopaminergic neurons. Also acts as a receptor for GABA, modulating inhibitory synaptic plasticity through non-ionotropic mechanisms. The polypeptide is Glutamate receptor ionotropic, delta-1 (Grid1) (Mus musculus (Mouse)).